Reading from the N-terminus, the 184-residue chain is Cbp/p300-interacting transactivator 4 (184 aa).

The span at 18–28 (PSAAAAHGPHA) shows a compositional bias: low complexity. Disordered stretches follow at residues 18 to 67 (PSAA…YGAF) and 94 to 128 (TPYP…PAHA). The span at 104-126 (PNAPGGPPGPQPAPSAAAPPPPA) shows a compositional bias: pro residues.

Belongs to the CITED family. As to quaternary structure, interacts via its C-terminal region with the CH1 domain of CREBBP and EP300. Interacts with all TFAP2/AP-2 isoforms. As to expression, expressed in most tissues examined with highest levels of expression in heart, liver, skeletal muscle and pancreas. Also expressed in bladder cell line ECV-304 and in various breast cancer cell lines. Also detected in both in situ and invasive breast tumors where its expression is down-regulated and mostly restricted to the cytoplasm of malignant epithelium. Down-regulation of expression is associated with elevated levels of HIF1A and increased tumor growth and angiogenesis.

It is found in the nucleus. The protein localises to the cytoplasm. In terms of biological role, acts as a transcriptional coactivator for TFAP2/AP-2. Enhances estrogen-dependent transactivation mediated by estrogen receptors. May function as an inhibitor of transactivation by HIF1A by disrupting HIF1A interaction with CREBBP. May be involved in regulation of gene expression during development and differentiation of blood cells, endothelial cells and mammary epithelial cells. The sequence is that of Cbp/p300-interacting transactivator 4 from Homo sapiens (Human).